Here is a 201-residue protein sequence, read N- to C-terminus: Akirin-2 (201 aa).

A phosphoserine mark is found at S18 and S21. A Nuclear localization signal motif is present at residues P22 to C27. S55 carries the post-translational modification Phosphoserine. The short motif at S198 to S201 is the SYVS motif element.

It belongs to the akirin family. In terms of assembly, homodimer. Interacts with IPO9; the interaction is direct. Associates with 20S and 26S proteasomes. Interacts with SMARCD1; promoting SWI/SNF complex recruitment. Interacts with NFKBIZ. Interacts with YWHAB. In terms of processing, polyubiquitinated. Polyubiquitination is dependent of UBR5 that extends pre-ubiquitinated AKIRIN2. In terms of tissue distribution, highly expressed in testis, cerebrum and cerebellum, and barely detectable in liver, heart, spleen and muscle. Also highly expressed in various tumor cells from hepatoma, glioblastoma and pheochromocytoma.

The protein localises to the nucleus. The protein resides in the cytoplasm. It is found in the membrane. Molecular adapter that acts as a bridge between a variety of multiprotein complexes, and which is involved in embryonic development, immunity, myogenesis and brain development. Plays a key role in nuclear protein degradation by promoting import of proteasomes into the nucleus: directly binds to fully assembled 20S proteasomes at one end and to nuclear import receptor IPO9 at the other end, bridging them together and mediating the import of pre-assembled proteasome complexes through the nuclear pore. Involved in innate immunity by regulating the production of interleukin-6 (IL6) downstream of Toll-like receptor (TLR): acts by bridging the NF-kappa-B inhibitor NFKBIZ and the SWI/SNF complex, leading to promote induction of IL6. Also involved in adaptive immunity by promoting B-cell activation. Involved in brain development: required for the survival and proliferation of cerebral cortical progenitor cells. Involved in myogenesis: required for skeletal muscle formation and skeletal development, possibly by regulating expression of muscle differentiation factors. Also plays a role in facilitating interdigital tissue regression during limb development. The chain is Akirin-2 from Rattus norvegicus (Rat).